The primary structure comprises 108 residues: Kanamycin resistance protein (108 aa).

The 99-residue stretch at serine 1–glutamine 99 folds into the N-acetyltransferase domain.

This is Kanamycin resistance protein from Rhizobium radiobacter (Agrobacterium tumefaciens).